The chain runs to 104 residues: Signal recognition particle 19 kDa protein (104 aa).

Belongs to the SRP19 family. As to quaternary structure, part of the signal recognition particle protein translocation system, which is composed of SRP and FtsY. Archaeal SRP consists of a 7S RNA molecule of 300 nucleotides and two protein subunits: SRP54 and SRP19.

It is found in the cytoplasm. Its function is as follows. Involved in targeting and insertion of nascent membrane proteins into the cytoplasmic membrane. Binds directly to 7S RNA and mediates binding of the 54 kDa subunit of the SRP. The polypeptide is Signal recognition particle 19 kDa protein (Archaeoglobus fulgidus (strain ATCC 49558 / DSM 4304 / JCM 9628 / NBRC 100126 / VC-16)).